The primary structure comprises 87 residues: UPF0473 protein PTH_1066 (87 aa).

It belongs to the UPF0473 family.

The polypeptide is UPF0473 protein PTH_1066 (Pelotomaculum thermopropionicum (strain DSM 13744 / JCM 10971 / SI)).